The following is a 337-amino-acid chain: Quinolinate synthase (337 aa).

Positions 38 and 59 each coordinate iminosuccinate. Cys104 serves as a coordination point for [4Fe-4S] cluster. Residues 130–132 (YAN) and Ser147 each bind iminosuccinate. A [4Fe-4S] cluster-binding site is contributed by Cys191. Iminosuccinate contacts are provided by residues 217–219 (HPE) and Thr234. [4Fe-4S] cluster is bound at residue Cys288.

It belongs to the quinolinate synthase family. Type 1 subfamily. [4Fe-4S] cluster serves as cofactor.

Its subcellular location is the cytoplasm. The enzyme catalyses iminosuccinate + dihydroxyacetone phosphate = quinolinate + phosphate + 2 H2O + H(+). It participates in cofactor biosynthesis; NAD(+) biosynthesis; quinolinate from iminoaspartate: step 1/1. Functionally, catalyzes the condensation of iminoaspartate with dihydroxyacetone phosphate to form quinolinate. The protein is Quinolinate synthase of Wigglesworthia glossinidia brevipalpis.